The primary structure comprises 1117 residues: Reverse gyrase (1117 aa).

The RG N-terminal-type zinc-finger motif lies at 3 to 42 (LATGAKYYHSCINCGGINTDTRNEKGLPCEVCLPFEDGDV). Residues C13, C16, C31, and C34 each coordinate Zn(2+). ATP-binding positions include Q84 and 101–108 (APTGVGKT). One can recognise a Helicase ATP-binding domain in the interval 88 to 284 (AKRLLLSKSF…LFRELLGFEI (197 aa)). Positions 206–209 (DDVD) match the DEAD box motif. The topoisomerase I stretch occupies residues 551 to 1117 (KDMKSRMIIV…EELNEILIKN (567 aa)). Residues 555 to 712 (SRMIIVESPT…NVQRIEMHEI (158 aa)) form the Toprim domain. E561 contacts Mg(2+). An RG C-terminal-type zinc finger spans residues 631 to 658 (IKRCSSCGAQFTDELPRCPYCNSDKIDD). 4 residues coordinate Zn(2+): C634, C637, C648, and C651. A Mg(2+)-binding site is contributed by D681. One can recognise a Topo IA-type catalytic domain in the interval 728–1114 (DVNLVKSQIV…NLYEELNEIL (387 aa)). Y864 (O-(5'-phospho-DNA)-tyrosine intermediate) is an active-site residue.

This sequence in the N-terminal section; belongs to the DEAD box helicase family. DDVD subfamily. In the C-terminal section; belongs to the type IA topoisomerase family. Monomer. The cofactor is Zn(2+). Requires Mg(2+) as cofactor.

The protein resides in the cytoplasm. It carries out the reaction ATP + H2O = ADP + phosphate + H(+). Functionally, modifies the topological state of DNA by introducing positive supercoils in an ATP-dependent process, increasing the linking number in steps of +1; also positively supercoils with dATP and ATP-gamma-S. With UTP or dTTP relaxes negatively supercoiled DNA, in the absence of any nucleotide partially relaxes negative supercoils. In the absence of nucleotide has a higher affinity for dsDNA with a single-stranded tail than dsDNA or ssDNA. Has an ATPase activity in the absence of DNA. Binds to single-stranded DNA, transiently cleaves and then rejoins the ends, introducing a positive supercoil in the process. The scissile phosphodiester is attacked by the catalytic tyrosine of the enzyme, resulting in the formation of a DNA-(5'-phosphotyrosyl)-enzyme intermediate. Probably involved in rewinding DNA strands in regions of the chromosome that have opened up to allow replication, transcription, DNA repair and/or for DNA protection. The chain is Reverse gyrase from Caldanaerobacter subterraneus subsp. tengcongensis (strain DSM 15242 / JCM 11007 / NBRC 100824 / MB4) (Thermoanaerobacter tengcongensis).